The following is a 319-amino-acid chain: rRNA adenine N-6-methyltransferase (319 aa).

The segment at 1-59 (MARAPRSPHPARSRETSRAHPPYGTRADRAPGRGRDRDRSPDSPGNTSSRDGGRSPDRA) is disordered. The segment covering 26–41 (RADRAPGRGRDRDRSP) has biased composition (basic and acidic residues). Positions 66, 68, 93, 114, 141, and 157 each coordinate S-adenosyl-L-methionine.

It belongs to the class I-like SAM-binding methyltransferase superfamily. rRNA adenine N(6)-methyltransferase family.

The enzyme catalyses adenosine(2085) in 23S rRNA + 2 S-adenosyl-L-methionine = N(6)-dimethyladenosine(2085) in 23S rRNA + 2 S-adenosyl-L-homocysteine + 2 H(+). Its function is as follows. This protein produces a dimethylation of the adenine residue at position 2085 in 23S rRNA, resulting in reduced affinity between ribosomes and macrolide-lincosamide-streptogramin B antibiotics. This chain is rRNA adenine N-6-methyltransferase (ermSF), found in Streptomyces fradiae (Streptomyces roseoflavus).